Here is a 608-residue protein sequence, read N- to C-terminus: Microtubule-associated protein 70-3 (608 aa).

The segment at 1–23 is disordered; sequence MADGVEEGNAVAPRGPARRRGTV. Residues 40–346 adopt a coiled-coil conformation; it reads DPVRVELTRL…ARSEAQLKEK (307 aa). The required for targeting to microtubules stretch occupies residues 224–458; that stretch reads ILDKLQRQKV…HLLNRSTDAV (235 aa). Disordered stretches follow at residues 354 to 493 and 570 to 608; these read LEDG…TANN and DKEQ…RNYQ. A compositionally biased stretch (polar residues) spans 363-379; sequence SGSSRLPTEGKSFSNGP. A compositionally biased stretch (low complexity) spans 402 to 421; that stretch reads RRSPSFHSRSSLSSSSSLVL. Over residues 476–493 the composition is skewed to polar residues; it reads IENTNSNTDESNKETANN. Residues 542 to 576 are a coiled coil; it reads LTKAMEVEAKKMRREVAAMEKEVAAMRVDKEQEVK. Low complexity predominate over residues 586–608; sequence TGSSQVLSGSRSSSRSGLTRNYQ.

This sequence belongs to the MAP70 family.

The protein resides in the cytoplasm. The protein localises to the cytoskeleton. In terms of biological role, plant-specific protein that interact with microtubules. The sequence is that of Microtubule-associated protein 70-3 (MAP70.3) from Oryza sativa subsp. japonica (Rice).